Consider the following 276-residue polypeptide: Glutamate 5-kinase (276 aa).

ATP is bound at residue Lys-14. Substrate contacts are provided by Ser-54, Asp-141, and Asn-157. Residues 177–178 and 219–225 each bind ATP; these read SD and TGGMLTK.

The protein belongs to the glutamate 5-kinase family.

It is found in the cytoplasm. The enzyme catalyses L-glutamate + ATP = L-glutamyl 5-phosphate + ADP. It functions in the pathway amino-acid biosynthesis; L-proline biosynthesis; L-glutamate 5-semialdehyde from L-glutamate: step 1/2. Functionally, catalyzes the transfer of a phosphate group to glutamate to form L-glutamate 5-phosphate. In Listeria monocytogenes serovar 1/2a (strain ATCC BAA-679 / EGD-e), this protein is Glutamate 5-kinase.